The sequence spans 214 residues: tRNA (guanine-N(7)-)-methyltransferase (214 aa).

Positions 43, 68, 95, and 117 each coordinate S-adenosyl-L-methionine. Asp117 is an active-site residue. Substrate is bound by residues Lys121, Asp153, and 190-193 (TEYE).

The protein belongs to the class I-like SAM-binding methyltransferase superfamily. TrmB family.

The enzyme catalyses guanosine(46) in tRNA + S-adenosyl-L-methionine = N(7)-methylguanosine(46) in tRNA + S-adenosyl-L-homocysteine. It functions in the pathway tRNA modification; N(7)-methylguanine-tRNA biosynthesis. Functionally, catalyzes the formation of N(7)-methylguanine at position 46 (m7G46) in tRNA. This is tRNA (guanine-N(7)-)-methyltransferase from Staphylococcus aureus (strain JH1).